The primary structure comprises 387 residues: Succinate--CoA ligase [ADP-forming] subunit beta (387 aa).

ATP is bound by residues lysine 46, glycine 53–glycine 55, glutamate 99, cysteine 102, and glutamate 107. Asparagine 196 and aspartate 210 together coordinate Mg(2+). Substrate is bound by residues asparagine 261 and glycine 318–valine 320.

It belongs to the succinate/malate CoA ligase beta subunit family. Heterotetramer of two alpha and two beta subunits. Mg(2+) is required as a cofactor.

The catalysed reaction is succinate + ATP + CoA = succinyl-CoA + ADP + phosphate. The enzyme catalyses GTP + succinate + CoA = succinyl-CoA + GDP + phosphate. It functions in the pathway carbohydrate metabolism; tricarboxylic acid cycle; succinate from succinyl-CoA (ligase route): step 1/1. In terms of biological role, succinyl-CoA synthetase functions in the citric acid cycle (TCA), coupling the hydrolysis of succinyl-CoA to the synthesis of either ATP or GTP and thus represents the only step of substrate-level phosphorylation in the TCA. The beta subunit provides nucleotide specificity of the enzyme and binds the substrate succinate, while the binding sites for coenzyme A and phosphate are found in the alpha subunit. This chain is Succinate--CoA ligase [ADP-forming] subunit beta, found in Campylobacter hominis (strain ATCC BAA-381 / DSM 21671 / CCUG 45161 / LMG 19568 / NCTC 13146 / CH001A).